Reading from the N-terminus, the 192-residue chain is NF-kappa-B inhibitor-interacting Ras-like protein 1 (192 aa).

Position 11–18 (11–18 (GLLSVGKT)) interacts with GTP. The Effector region signature appears at 35 to 43 (DCETLEDVY). Positions 58-93 (HLYDTRGLQKGVELPKHYFSFADGFVLVYSVNNLES) are interactions with NFKBIA and NFKBIB. Residues 61–65 (DTRGL) and 120–123 (NKLD) contribute to the GTP site. Positions 168–192 (LSQPQSKSSFPLPGRKNKGNSNPEN) are disordered.

It belongs to the small GTPase superfamily. Ras family. KappaB-Ras subfamily. Interacts with both NF-kappa-B inhibitor alpha (NFKBIA) and beta (NFKBIB) in vitro. However, it probably only interacts with NFKBIB in vivo. Forms a complex with NFKBIB and NF-kappa-B heterodimer (p50/NFKB1 and p65/RELA). Also interacts with c-Rel (REL).

The protein localises to the cytoplasm. Its function is as follows. Atypical Ras-like protein that acts as a potent regulator of NF-kappa-B activity by preventing the degradation of NF-kappa-B inhibitor beta (NFKBIB) by most signals, explaining why NFKBIB is more resistant to degradation. May act by blocking phosphorylation of NFKBIB and mediating cytoplasmic retention of p65/RELA NF-kappa-B subunit. It is unclear whether it acts as a GTPase. Both GTP- and GDP-bound forms block phosphorylation of NFKBIB. This Mus musculus (Mouse) protein is NF-kappa-B inhibitor-interacting Ras-like protein 1 (Nkiras1).